Reading from the N-terminus, the 221-residue chain is Small ribosomal subunit protein uS3c (221 aa).

Positions isoleucine 43 to alanine 121 constitute a KH type-2 domain.

It belongs to the universal ribosomal protein uS3 family. As to quaternary structure, part of the 30S ribosomal subunit.

Its subcellular location is the plastid. The protein localises to the chloroplast. The protein is Small ribosomal subunit protein uS3c (rps3) of Jasminum nudiflorum (Winter jasmine).